A 985-amino-acid chain; its full sequence is Thioredoxin domain-containing protein 11 (985 aa).

The segment covering methionine 1–serine 11 has biased composition (gly residues). The segment at methionine 1–threonine 38 is disordered. The span at glycine 29–threonine 38 shows a compositional bias: low complexity. A helical membrane pass occupies residues leucine 65–serine 85. A Thioredoxin 1 domain is found at isoleucine 92 to lysine 214. 2 cysteine pairs are disulfide-bonded: cysteine 469–cysteine 472 and cysteine 719–cysteine 722. The Thioredoxin 2 domain occupies leucine 649–aspartate 799. Positions valine 821–threonine 919 form a coiled coil. Serine 828 bears the Phosphoserine mark. The disordered stretch occupies residues arginine 935 to aspartate 985.

This sequence belongs to the protein disulfide isomerase family. Interacts with the cytoplasmic part of DUOX1 and DUOX2. Interacts with TPO and CYBA. As to expression, widely expressed at low level. Expressed at higher level in thyroid and prostate.

It is found in the endoplasmic reticulum membrane. In terms of biological role, may act as a redox regulator involved in DUOX proteins folding. The interaction with DUOX1 and DUOX2 suggest that it belongs to a multiprotein complex constituting the thyroid H(2)O(2) generating system. It is however not sufficient to assist DUOX1 and DUOX2 in H(2)O(2) generation. The polypeptide is Thioredoxin domain-containing protein 11 (TXNDC11) (Homo sapiens (Human)).